The following is a 230-amino-acid chain: Large ribosomal subunit protein uL1 (230 aa).

The protein belongs to the universal ribosomal protein uL1 family. As to quaternary structure, part of the 50S ribosomal subunit.

Its function is as follows. Binds directly to 23S rRNA. The L1 stalk is quite mobile in the ribosome, and is involved in E site tRNA release. In terms of biological role, protein L1 is also a translational repressor protein, it controls the translation of the L11 operon by binding to its mRNA. The sequence is that of Large ribosomal subunit protein uL1 from Afipia carboxidovorans (strain ATCC 49405 / DSM 1227 / KCTC 32145 / OM5) (Oligotropha carboxidovorans).